Consider the following 473-residue polypeptide: Endoglucanase B (473 aa).

Positions 1–17 (MKFLNTFSLLSLAIIGS) are cleaved as a signal peptide. Residues 18–367 (KAMKNISSKE…GLIKGLGNSI (350 aa)) form a catalytic region. Glu-173 serves as the catalytic Proton donor. The Nucleophile role is filled by Glu-295. A linker region spans residues 365 to 387 (NSIKTRTTIRRTTTTTTSQSQPT). CBM10 domains are found at residues 391–427 (SCFSVNLGYSCCNGCEVEYTDSDGEWGVENGNWCGIK) and 436–473 (ICWSEKLGYPCCQNTSSVVYTDNDGKWGVENGNWCGIY).

The protein belongs to the glycosyl hydrolase 5 (cellulase A) family.

The catalysed reaction is Endohydrolysis of (1-&gt;4)-beta-D-glucosidic linkages in cellulose, lichenin and cereal beta-D-glucans.. Its function is as follows. Rate of hydrolysis of cellulo-oligosaccharides increased with increasing chain length from cellotriose to cellopentaose. The polypeptide is Endoglucanase B (CELB) (Neocallimastix patriciarum (Rumen fungus)).